Consider the following 303-residue polypeptide: Mycothiol acetyltransferase (303 aa).

Asp-33 is a binding site for 1D-myo-inositol 2-(L-cysteinylamino)-2-deoxy-alpha-D-glucopyranoside. Acetyl-CoA-binding positions include 78-80 (VVV) and 86-91 (RRGTGS). Positions 150–303 (VRFATYSGPH…AYAAVAPTDV (154 aa)) constitute an N-acetyltransferase domain. Residues Glu-177, Lys-218, and Glu-226 each coordinate 1D-myo-inositol 2-(L-cysteinylamino)-2-deoxy-alpha-D-glucopyranoside. 230-232 (VGV) lines the acetyl-CoA pocket. A 1D-myo-inositol 2-(L-cysteinylamino)-2-deoxy-alpha-D-glucopyranoside-binding site is contributed by Tyr-269. An acetyl-CoA-binding site is contributed by 274 to 279 (NTAAVK).

Belongs to the acetyltransferase family. MshD subfamily. As to quaternary structure, monomer.

It catalyses the reaction 1D-myo-inositol 2-(L-cysteinylamino)-2-deoxy-alpha-D-glucopyranoside + acetyl-CoA = mycothiol + CoA + H(+). Functionally, catalyzes the transfer of acetyl from acetyl-CoA to desacetylmycothiol (Cys-GlcN-Ins) to form mycothiol. In Mycolicibacterium gilvum (strain PYR-GCK) (Mycobacterium gilvum (strain PYR-GCK)), this protein is Mycothiol acetyltransferase.